The primary structure comprises 467 residues: tRNA dimethylallyltransferase (467 aa).

A mitochondrion-targeting transit peptide spans 1–47 (MAAAAAARAVPVSSGFRGLRRTLPLVVILGATGTGKSTLALQLGQRL). Dimethylallyl diphosphate is bound at residue 32–37 (TGTGKS). 2 interaction with substrate tRNA regions span residues 55–58 (DSMQ) and 183–187 (RKVAR). The interval 221 to 230 (FPNPCILWLH) is core aggregation region. Positions 233-255 (QAVLDERLDKRVDDMLAAGLLEE) are interaction with isopentenylpyrophosphate transferase. Interaction with substrate tRNA stretches follow at residues 281–283 (QSI) and 313–331 (ALKQVTKRYARKQNRWVKN). The Matrin-type zinc-finger motif lies at 395–425 (HMCDLCDRIIIGDREWAAHLKSKSHLHQLKK). Residues 432-467 (DAVSATGSQSNSPDCDPERIEGESSGQHNQELKASV) form a disordered region. Residues serine 443 and serine 455 each carry the phosphoserine modification.

It belongs to the IPP transferase family.

The protein resides in the mitochondrion. Its subcellular location is the cytoplasm. It is found in the nucleus. The catalysed reaction is adenosine(37) in tRNA + dimethylallyl diphosphate = N(6)-dimethylallyladenosine(37) in tRNA + diphosphate. Functionally, catalyzes the transfer of a dimethylallyl group onto the adenine at position 37 of both cytosolic and mitochondrial tRNAs, leading to the formation of N6-(dimethylallyl)adenosine (i6A37). Mediates modification of a limited subset of tRNAs: tRNA(Ser)(AGA), tRNA(Ser)(CGA), tRNA(Ser)(UGA), as well as partial modification of the selenocysteine tRNA(Ser)(UCA). TRIT1 is therefore required for selenoprotein expression. This Mus musculus (Mouse) protein is tRNA dimethylallyltransferase (Trit1).